The chain runs to 208 residues: Thymidylate kinase (208 aa).

10-17 (GIDGSGKT) serves as a coordination point for ATP.

It belongs to the thymidylate kinase family.

The catalysed reaction is dTMP + ATP = dTDP + ADP. Phosphorylation of dTMP to form dTDP in both de novo and salvage pathways of dTTP synthesis. The polypeptide is Thymidylate kinase (Ligilactobacillus salivarius (strain UCC118) (Lactobacillus salivarius)).